Reading from the N-terminus, the 326-residue chain is MSLGLQCLAAVLFSALFSLGVILVHLPWRALKSKDPRERILGSPKELVPTCPYEYIRNIYGRHHWAPFVAKLAPNLKESDSDRYTMVLEIMDCIHLCLIMVDDITDDSDYRKGRPAAHIIYGRSETANRAYLRVSQIINKTTQDFPRLAPWVTQSLAEILEGQDISLVWRRDGLTSFPKAHDERVIAYRCMSSLKTGALFRLLGRLVLENRSMDDTLSQVGYYSQLQNDCKNVFSSEYAKAKGTLAEDLRNRELTYPIILALNEPEGFYIEKAFESGSPRDIQNAIGVIQSENVYRACLDELKQYESNVREWVTLWGRKEKLDLTH.

Residues 8 to 28 (LAAVLFSALFSLGVILVHLPW) form a helical membrane-spanning segment. His-95 serves as a coordination point for isopentenyl diphosphate. Positions 102 and 106 each coordinate Mg(2+). Arg-111 is a dimethylallyl diphosphate binding site. Asn-139 is a glycosylation site (N-linked (GlcNAc...) asparagine). Lys-195 is a binding site for dimethylallyl diphosphate. Asn-210 is a glycosylation site (N-linked (GlcNAc...) asparagine).

Belongs to the FPP/GGPP synthase family.

Its subcellular location is the membrane. It functions in the pathway secondary metabolite biosynthesis. Its function is as follows. Cytochrome P450 monooxygenase; part of the gene cluster that mediates the biosynthesis of the indole diterpenes nodulisporic acids (NA). Nodulisporic acid A (NAA) and its chemically modified derivatives are of particular significance because of their highly potent insecticidal activity against blood-feeding arthropods and lack of observable adverse effects on mammals, in particular the tremogenicity associated with the paspaline-derived IDTs is not observed. The geranylgeranyl diphosphate (GGPP) synthase ggs1, localized outside of the cluster, is proposed to catalyze the first step in nodulisporic acid biosynthesis via conversion of farnesyl pyrophosphate and isopentyl pyrophosphate into geranylgeranyl pyrophosphate (GGPP). Condensation of indole-3-glycerol phosphate with GGPP by the prenyl transferase nodC then forms 3-geranylgeranylindole (3-GGI). Epoxidation by the FAD-dependent monooxygenase nodM leads to a single-epoxidized-GGI that is substrate of the terpene cyclase nodB for cyclization to yield emindole SB. The terminal methyl carbon, C28, of emindole SB is then oxidized by the cytochrome P450 monooxygenase nodW to produce nodulisporic acid F (NAF), the pentacyclic core of NAA. NAF is converted to nodulisporic acid E (NAE) via prenylation. This step is probably performed by one of the indole diterpene prenyltransferases nodD1 or nodD2. Several oxidation steps performed by the FAD-linked oxidoreductase nodO and one of the cytochrome P450 monooxygenase nodR, nodX or nodZ further convert NAE to nodulisporic acid D (NAD). NAD is substrate of cytochrome P450 monooxygenase nodJ to produce the precursor of nodulisporic acid C (NAC), converted to NAC by one of the indole diterpene prenyltransferases nodD1 or nodD2. The FAD-dependent monooxygenase nodY2 then oxidizes NAC to nodulisporic acid B (NAB). Finally NAB is converted to NAA by one of the cytochrome P450 monooxygenases nodR, nodX or nodZ. The protein is Prenyl transferase nodC of Hypoxylon pulicicidum.